The following is a 421-amino-acid chain: UDP-N-acetylglucosamine 1-carboxyvinyltransferase 1 (421 aa).

22-23 serves as a coordination point for phosphoenolpyruvate; it reads KN. Residue Arg94 participates in UDP-N-acetyl-alpha-D-glucosamine binding. Residue Cys118 is the Proton donor of the active site. Cys118 is modified (2-(S-cysteinyl)pyruvic acid O-phosphothioketal). UDP-N-acetyl-alpha-D-glucosamine contacts are provided by residues 123 to 127, Asp310, and Val332; that span reads RPIEL.

Belongs to the EPSP synthase family. MurA subfamily.

The protein resides in the cytoplasm. It carries out the reaction phosphoenolpyruvate + UDP-N-acetyl-alpha-D-glucosamine = UDP-N-acetyl-3-O-(1-carboxyvinyl)-alpha-D-glucosamine + phosphate. It participates in cell wall biogenesis; peptidoglycan biosynthesis. In terms of biological role, cell wall formation. Adds enolpyruvyl to UDP-N-acetylglucosamine. This is UDP-N-acetylglucosamine 1-carboxyvinyltransferase 1 from Clostridium perfringens (strain 13 / Type A).